The sequence spans 55 residues: Large ribosomal subunit protein bL33 (55 aa).

Belongs to the bacterial ribosomal protein bL33 family.

In Photorhabdus laumondii subsp. laumondii (strain DSM 15139 / CIP 105565 / TT01) (Photorhabdus luminescens subsp. laumondii), this protein is Large ribosomal subunit protein bL33.